Consider the following 146-residue polypeptide: Late protein H7 (146 aa).

Residues 10 to 32 (LAMTAFFGELNTLDIMALIMSIF) traverse the membrane as a helical segment.

The protein belongs to the chordopoxvirinae H7 family.

The protein localises to the membrane. Contributes to the formation of crescents and immature virions (IV). In Vaccinia virus (strain Tian Tan) (VACV), this protein is Late protein H7.